A 609-amino-acid polypeptide reads, in one-letter code: Tyrosyl-DNA phosphodiesterase 1 (609 aa).

Residues 1-12 show a composition bias toward polar residues; it reads MSQESSYGKWTI. Residues 1 to 154 are disordered; that stretch reads MSQESSYGKW…EYETSGEGQD (154 aa). Phosphoserine occurs at positions 61, 119, and 132. The segment covering 127–143 has biased composition (basic and acidic residues); sequence KVEDRSPPDSHRAQRAD. Thr148 is subject to Phosphothreonine. A Phosphoserine modification is found at Ser149. His264 functions as the Nucleophile in the catalytic mechanism. Lys266 is a binding site for substrate. The segment at 401–404 is interaction with DNA; it reads SIGS. His494 acts as the Proton donor/acceptor in catalysis. Lys496 contributes to the substrate binding site.

The protein belongs to the tyrosyl-DNA phosphodiesterase family. In terms of assembly, monomer.

The protein localises to the nucleus. It is found in the cytoplasm. Functionally, DNA repair enzyme that can remove a variety of covalent adducts from DNA through hydrolysis of a 3'-phosphodiester bond, giving rise to DNA with a free 3' phosphate. Catalyzes the hydrolysis of dead-end complexes between DNA and the topoisomerase I active site tyrosine residue. Hydrolyzes 3'-phosphoglycolates on protruding 3' ends on DNA double-strand breaks due to DNA damage by radiation and free radicals. Acts on blunt-ended double-strand DNA breaks and on single-stranded DNA. Has low 3'exonuclease activity and can remove a single nucleoside from the 3'end of DNA and RNA molecules with 3'hydroxyl groups. Has no exonuclease activity towards DNA or RNA with a 3'phosphate. In Rattus norvegicus (Rat), this protein is Tyrosyl-DNA phosphodiesterase 1 (Tdp1).